Reading from the N-terminus, the 189-residue chain is Protein GrpE (189 aa).

Basic and acidic residues predominate over residues 1-38; it reads MTKSNETERMEESEETHSSDIRSASESDHASGSDHTES. A disordered region spans residues 1–54; that stretch reads MTKSNETERMEESEETHSSDIRSASESDHASGSDHTESADEIPTADAEQGELEQ.

The protein belongs to the GrpE family. Homodimer.

It is found in the cytoplasm. Functionally, participates actively in the response to hyperosmotic and heat shock by preventing the aggregation of stress-denatured proteins, in association with DnaK and GrpE. It is the nucleotide exchange factor for DnaK and may function as a thermosensor. Unfolded proteins bind initially to DnaJ; upon interaction with the DnaJ-bound protein, DnaK hydrolyzes its bound ATP, resulting in the formation of a stable complex. GrpE releases ADP from DnaK; ATP binding to DnaK triggers the release of the substrate protein, thus completing the reaction cycle. Several rounds of ATP-dependent interactions between DnaJ, DnaK and GrpE are required for fully efficient folding. The polypeptide is Protein GrpE (Tropheryma whipplei (strain Twist) (Whipple's bacillus)).